Reading from the N-terminus, the 297-residue chain is MRPQLSDYQHLASGKVRELYRVDDEHLLVVASDRISAYDYVLDSMIPDKGRILTAMSVFFFGLVDAPNHLAGPPDDPRIPDEVLGRALVVRQLEMLPVECVARGYLTGSGLLDYQASGKVCGIALPPGLVGASKFAEPLFTPATKAELGDHDENISFAQVIETVGGVRANQLRDRTLQIYVKAADHALTRGVIIADTKFEFGADRDGNLLLADEIFTPDSSRYWPADEYRAGVVQNSFDKQFVRNWLTSAESGWDRGGDQPPPPLPDHIIEATRERYIEAYERISGLGFGEWIGPGA.

Belongs to the SAICAR synthetase family.

The catalysed reaction is 5-amino-1-(5-phospho-D-ribosyl)imidazole-4-carboxylate + L-aspartate + ATP = (2S)-2-[5-amino-1-(5-phospho-beta-D-ribosyl)imidazole-4-carboxamido]succinate + ADP + phosphate + 2 H(+). Its pathway is purine metabolism; IMP biosynthesis via de novo pathway; 5-amino-1-(5-phospho-D-ribosyl)imidazole-4-carboxamide from 5-amino-1-(5-phospho-D-ribosyl)imidazole-4-carboxylate: step 1/2. This is Phosphoribosylaminoimidazole-succinocarboxamide synthase from Mycobacterium ulcerans (strain Agy99).